The primary structure comprises 428 residues: MADVVLGSQWGDEGKGKLVDVLCEDIDVCARCQGGNNAGHTIIVKGVKFDFHMLPSGLVNPKCKNLIGSGVVIHLPSFFEELEAIENKGLDCTGRLFVSSRAHLVFGFHQRTDKLKEAELHETKKSIGTTGKGIGPTYSTKASRSGIRVHHLVSDEPDSWKEFETRLSRLIETRKKRYGHFDCDLESELAKYKVLREKIKPFVVDSIEFMHDAIKDKKKILVEGANALMLDIDFGTYPYVTSSNTGIGGVLTGLGIPPKAINNIYGVVKAYTTRVGEGPFPTEQLNEDGEKLQTIGCEYGVTTGRKRRCGWLDLVVLKYSTLINGYTSLNITKLDVLDTFKEIKIGVSYTYQGKRVTTFPEDLHALGKVDVEYVTFPGWEEDITQIKNYEDLPANAKKYLEFIEEYVEVPIQWVGTGPGRESMLEKNI.

Residues 11 to 17 and 39 to 41 contribute to the GTP site; these read GDEGKGK and GHT. Asp12 serves as the catalytic Proton acceptor. Mg(2+) contacts are provided by Asp12 and Gly39. IMP is bound by residues 12–15, 37–40, Thr130, Arg144, Asn226, Thr241, and Arg305; these read DEGK and NAGH. The Proton donor role is filled by His40. Position 301-307 (301-307) interacts with substrate; the sequence is VTTGRKR. GTP contacts are provided by residues Arg307, 333–335, and 415–417; these read KLD and GTG.

It belongs to the adenylosuccinate synthetase family. In terms of assembly, homodimer. Requires Mg(2+) as cofactor.

Its subcellular location is the cytoplasm. The enzyme catalyses IMP + L-aspartate + GTP = N(6)-(1,2-dicarboxyethyl)-AMP + GDP + phosphate + 2 H(+). The protein operates within purine metabolism; AMP biosynthesis via de novo pathway; AMP from IMP: step 1/2. Functionally, plays an important role in the de novo pathway and in the salvage pathway of purine nucleotide biosynthesis. Catalyzes the first committed step in the biosynthesis of AMP from IMP. The chain is Adenylosuccinate synthetase from Komagataella phaffii (strain GS115 / ATCC 20864) (Yeast).